The chain runs to 446 residues: Tetratricopeptide repeat protein 23 (446 aa).

TPR repeat units lie at residues 45–78 (LRLS…TRIC), 137–170 (VELF…SKEM), 186–219 (ARIK…TEIS), 310–347 (TAKF…KVAV), and 356–389 (AETY…QTLL). The tract at residues 410 to 446 (APEVPARPRPSPGAKAAFCAGGRPYSVPGRTRPSAAD) is disordered.

Associated with the EvC complex composed of EFCAB7, IQCE, EVC2 and EVC.

It is found in the cell projection. It localises to the cilium. In terms of biological role, participates positively in the ciliary Hedgehog (Hh) signaling. The sequence is that of Tetratricopeptide repeat protein 23 (TTC23) from Bos taurus (Bovine).